Consider the following 430-residue polypeptide: tRNA(Ile)-lysidine synthase (430 aa).

24 to 29 (SGGLDS) lines the ATP pocket.

Belongs to the tRNA(Ile)-lysidine synthase family.

The protein localises to the cytoplasm. The catalysed reaction is cytidine(34) in tRNA(Ile2) + L-lysine + ATP = lysidine(34) in tRNA(Ile2) + AMP + diphosphate + H(+). Functionally, ligates lysine onto the cytidine present at position 34 of the AUA codon-specific tRNA(Ile) that contains the anticodon CAU, in an ATP-dependent manner. Cytidine is converted to lysidine, thus changing the amino acid specificity of the tRNA from methionine to isoleucine. The chain is tRNA(Ile)-lysidine synthase from Haemophilus influenzae (strain ATCC 51907 / DSM 11121 / KW20 / Rd).